Consider the following 1495-residue polypeptide: Chromosome partition protein MukB (1495 aa).

Residue 60 to 67 coordinates ATP; sequence GGNGAGKS. Coiled coils occupy residues 322-693, 861-1140, and 1233-1289; these read RART…SQPD, EDVM…AKVS, and IDAI…LQNI. The segment at 692–809 is flexible hinge; that stretch reads PDGSEDARLN…EIPLFGRAAR (118 aa).

This sequence belongs to the SMC family. MukB subfamily. In terms of assembly, homodimerization via its hinge domain. Binds to DNA via its C-terminal region. Interacts, and probably forms a ternary complex, with MukE and MukF via its C-terminal region. The complex formation is stimulated by calcium or magnesium. Interacts with tubulin-related protein FtsZ.

Its subcellular location is the cytoplasm. The protein resides in the nucleoid. Functionally, plays a central role in chromosome condensation, segregation and cell cycle progression. Functions as a homodimer, which is essential for chromosome partition. Involved in negative DNA supercoiling in vivo, and by this means organize and compact chromosomes. May achieve or facilitate chromosome segregation by condensation DNA from both sides of a centrally located replisome during cell division. This chain is Chromosome partition protein MukB, found in Pasteurella multocida (strain Pm70).